Consider the following 224-residue polypeptide: Iron-sulfur cluster repair protein ScdA (224 aa).

This sequence belongs to the RIC family. ScdA subfamily. In terms of assembly, homodimer.

It localises to the cytoplasm. Functionally, di-iron-containing protein involved in the repair of iron-sulfur clusters damaged by oxidative and nitrosative stress conditions. The polypeptide is Iron-sulfur cluster repair protein ScdA (Staphylococcus epidermidis (strain ATCC 35984 / DSM 28319 / BCRC 17069 / CCUG 31568 / BM 3577 / RP62A)).